The chain runs to 328 residues: Formimidoylglutamase (328 aa).

6 residues coordinate Mn(2+): His133, Asp159, His161, Asp163, Asp253, and Asp255.

Belongs to the arginase family. The cofactor is Mn(2+).

The enzyme catalyses N-formimidoyl-L-glutamate + H2O = formamide + L-glutamate. It functions in the pathway amino-acid degradation; L-histidine degradation into L-glutamate; L-glutamate from N-formimidoyl-L-glutamate (hydrolase route): step 1/1. Its function is as follows. Catalyzes the conversion of N-formimidoyl-L-glutamate to L-glutamate and formamide. The protein is Formimidoylglutamase of Streptococcus pyogenes serotype M5 (strain Manfredo).